The sequence spans 431 residues: UDP-N-acetylmuramate--L-alanine ligase (431 aa).

108 to 114 is an ATP binding site; the sequence is GAHGKST.

The protein belongs to the MurCDEF family.

The protein resides in the cytoplasm. The enzyme catalyses UDP-N-acetyl-alpha-D-muramate + L-alanine + ATP = UDP-N-acetyl-alpha-D-muramoyl-L-alanine + ADP + phosphate + H(+). The protein operates within cell wall biogenesis; peptidoglycan biosynthesis. Cell wall formation. The chain is UDP-N-acetylmuramate--L-alanine ligase from Campylobacter jejuni subsp. jejuni serotype O:23/36 (strain 81-176).